The primary structure comprises 439 residues: 26S proteasome regulatory subunit 4 homolog (439 aa).

A disordered region spans residues 1–46; that stretch reads MGNNQSQGQGDKGEKKDQPKYQPPPPPTQFGKKKKRRGAETSTKLP. 225–232 contacts ATP; it reads GEPGTGKT.

This sequence belongs to the AAA ATPase family.

The protein resides in the cytoplasm. It is found in the nucleus. In terms of biological role, the 26S proteasome is involved in the ATP-dependent degradation of ubiquitinated proteins. The regulatory (or ATPase) complex confers ATP dependency and substrate specificity to the 26S complex. Plays an important role in regulating both growth and multicellular development. This chain is 26S proteasome regulatory subunit 4 homolog (psmC1), found in Dictyostelium discoideum (Social amoeba).